Reading from the N-terminus, the 72-residue chain is Nod factor export ATP-binding protein I (72 aa).

This sequence belongs to the ABC transporter superfamily. Lipooligosaccharide exporter (TC 3.A.1.102) family. In terms of assembly, the complex is composed of two ATP-binding proteins (NodI) and two transmembrane proteins (NodJ).

It is found in the cell inner membrane. In terms of biological role, part of the ABC transporter complex NodIJ involved in the export of the nodulation factors (Nod factors), the bacterial signal molecules that induce symbiosis and subsequent nodulation induction. Nod factors are LCO (lipo-chitin oligosaccharide), a modified beta-1,4-linked N-acetylglucosamine oligosaccharide. This subunit is responsible for energy coupling to the transport system. This chain is Nod factor export ATP-binding protein I, found in Rhizobium leguminosarum bv. trifolii.